Consider the following 608-residue polypeptide: Malonate--CoA ligase (608 aa).

It belongs to the ATP-dependent AMP-binding enzyme family. Expressed in flowers.

Its subcellular location is the cytoplasm. It localises to the nucleus. It catalyses the reaction malonate + ATP + CoA = malonyl-CoA + AMP + diphosphate. Its function is as follows. Malonate--CoA ligase that catalyzes the formation of malonyl-CoA directly from malonate and CoA. May be required for the detoxification of malonate. The polypeptide is Malonate--CoA ligase (AAE13) (Arabidopsis thaliana (Mouse-ear cress)).